A 397-amino-acid chain; its full sequence is MSPLRKTVPEFLAHLKSLPISKIASNDVLTICVGNESADMDSIASAITYSYCQYIYNEGTYSEEKKKGSFIVPIIDIPREDLSLRRDVMYVLEKLKIKEEELFFIEDLKSLKQNVSQGTELNSYLVDNNDTPKNLKNYIDNVVGIIDHHFDLQKHLDAEPRIVKVSGSCSSLVFNYWYEKLQGDREVVMNIAPLLMGAILIDTSNMRRKVEESDKLAIERCQAVLSGAVNEVSAQGLEDSSEFYKEIKSRKNDIKGFSVSDILKKDYKQFNFQGKGHKGLEIGLSSIVKRMSWLFNEHGGEADFVNQCRRFQAERGLDVLVLLTSWRKAGDSHRELVILGDSNVVRELIERVSDKLQLQLFGGNLDGGVAMFKQLNVEATRKQVVPYLEEAYSNLEE.

Mg(2+) contacts are provided by Asp-41, Asp-127, and His-148. Positions 41, 127, and 148 each coordinate Mn(2+). Positions 149, 286, and 381 each coordinate ATP.

It belongs to the PPase class C family. Mn(2+) serves as cofactor. Mg(2+) is required as a cofactor.

The catalysed reaction is [phosphate](n) + H2O = [phosphate](n-1) + phosphate + H(+). Polyphosphatase (polyPase) involved in the degradation of inorganic polyphosphates (polyP) that is able to degrade a range of chains from three to several hundreds of residues in a highly processive manner. Exclusively shows exopolyphosphatase activity, cleaving inside the polyP chain. The polypeptide is Polyphosphatase (Saccharomyces cerevisiae (strain ATCC 204508 / S288c) (Baker's yeast)).